The following is a 192-amino-acid chain: Elongation factor P (192 aa).

It belongs to the elongation factor P family.

Its subcellular location is the cytoplasm. It functions in the pathway protein biosynthesis; polypeptide chain elongation. In terms of biological role, involved in peptide bond synthesis. Stimulates efficient translation and peptide-bond synthesis on native or reconstituted 70S ribosomes in vitro. Probably functions indirectly by altering the affinity of the ribosome for aminoacyl-tRNA, thus increasing their reactivity as acceptors for peptidyl transferase. The protein is Elongation factor P of Borrelia recurrentis (strain A1).